A 258-amino-acid chain; its full sequence is Pimeloyl-[acyl-carrier protein] methyl ester esterase (258 aa).

The 227-residue stretch at 16–242 (LVLLHGWGLN…AAHAPFISHP (227 aa)) folds into the AB hydrolase-1 domain. Substrate-binding positions include Trp22, 82–83 (SM), and 143–147 (FLALQ). Ser82 (nucleophile) is an active-site residue. Catalysis depends on residues Asp207 and His235. His235 is a binding site for substrate.

It belongs to the AB hydrolase superfamily. Carboxylesterase BioH family. As to quaternary structure, monomer.

It localises to the cytoplasm. It catalyses the reaction 6-carboxyhexanoyl-[ACP] methyl ester + H2O = 6-carboxyhexanoyl-[ACP] + methanol + H(+). It participates in cofactor biosynthesis; biotin biosynthesis. Functionally, the physiological role of BioH is to remove the methyl group introduced by BioC when the pimeloyl moiety is complete. It allows to synthesize pimeloyl-ACP via the fatty acid synthetic pathway through the hydrolysis of the ester bonds of pimeloyl-ACP esters. In Yersinia pseudotuberculosis serotype IB (strain PB1/+), this protein is Pimeloyl-[acyl-carrier protein] methyl ester esterase.